The primary structure comprises 338 residues: Histone acetyltransferase SAS2 (338 aa).

Positions 1–15 (MARSLSQSLTATTQK) are enriched in polar residues. The segment at 1-31 (MARSLSQSLTATTQKLKGKKNGGKGKNKPSA) is disordered. Basic residues predominate over residues 16–31 (LKGKKNGGKGKNKPSA). The MYST-type HAT domain maps to 45–338 (LNERNIRQIQ…LKDEYLLIDD (294 aa)). Residues 100 to 126 (LFVCEYCFKYTDDQTRFVGHVASCPFQ) form a C2HC MYST-type zinc finger. K168 carries the post-translational modification N6-acetyllysine; by autocatalysis. Acetyl-CoA contacts are provided by residues 209 to 211 (ILI) and 216 to 222 (QRRGLGL). Residue E242 is the Proton donor/acceptor of the active site. Acetyl-CoA-binding residues include S246 and K323.

Belongs to the MYST (SAS/MOZ) family. Interacts with CAC1. Component of the SAS complex, at least composed of SAS2, SAS4 and SAS5. These three proteins constitute the core of the complex and are sufficient to acetylate histones. SAS4 is essential for HAT activity of the complex, while SAS5 is required for maxiaml HAT activity. Post-translationally, autoacetylation at Lys-168 is required for proper function.

The protein resides in the cytoplasm. It is found in the nucleus. The enzyme catalyses L-lysyl-[protein] + acetyl-CoA = N(6)-acetyl-L-lysyl-[protein] + CoA + H(+). In terms of biological role, histone acetyltransferase (HAT) subunit of the SAS complex, a multiprotein complex that acetylates 'Lys-16' of histone H4 and 'Lys-14' of histone H3. The SAS complex is however unable to acetylate nucleosomal histones. The complex is involved in transcriptional silencing at telomeres and at HML locus. Also involved in rDNA silencing and G0 control. The chain is Histone acetyltransferase SAS2 (SAS2) from Saccharomyces cerevisiae (strain ATCC 204508 / S288c) (Baker's yeast).